Here is a 259-residue protein sequence, read N- to C-terminus: Adenosylcobinamide-GDP ribazoletransferase (259 aa).

The next 6 membrane-spanning stretches (helical) occupy residues 9-29 (NLFF…WIEV), 43-63 (LVGL…LYWV), 64-84 (SPSV…GGFH), 118-138 (ALAL…LALF), 143-163 (VSLA…SFIF), and 196-216 (VLAL…GLVI).

Belongs to the CobS family. Mg(2+) serves as cofactor.

The protein resides in the cell inner membrane. It carries out the reaction alpha-ribazole + adenosylcob(III)inamide-GDP = adenosylcob(III)alamin + GMP + H(+). The catalysed reaction is alpha-ribazole 5'-phosphate + adenosylcob(III)inamide-GDP = adenosylcob(III)alamin 5'-phosphate + GMP + H(+). Its pathway is cofactor biosynthesis; adenosylcobalamin biosynthesis; adenosylcobalamin from cob(II)yrinate a,c-diamide: step 7/7. Its function is as follows. Joins adenosylcobinamide-GDP and alpha-ribazole to generate adenosylcobalamin (Ado-cobalamin). Also synthesizes adenosylcobalamin 5'-phosphate from adenosylcobinamide-GDP and alpha-ribazole 5'-phosphate. The chain is Adenosylcobinamide-GDP ribazoletransferase from Shewanella halifaxensis (strain HAW-EB4).